The sequence spans 309 residues: Branched-chain-amino-acid aminotransferase (309 aa).

Residue Lys-160 is modified to N6-(pyridoxal phosphate)lysine.

It belongs to the class-IV pyridoxal-phosphate-dependent aminotransferase family. As to quaternary structure, homohexamer. It depends on pyridoxal 5'-phosphate as a cofactor.

The enzyme catalyses L-leucine + 2-oxoglutarate = 4-methyl-2-oxopentanoate + L-glutamate. The catalysed reaction is L-isoleucine + 2-oxoglutarate = (S)-3-methyl-2-oxopentanoate + L-glutamate. It catalyses the reaction L-valine + 2-oxoglutarate = 3-methyl-2-oxobutanoate + L-glutamate. The protein operates within amino-acid biosynthesis; L-isoleucine biosynthesis; L-isoleucine from 2-oxobutanoate: step 4/4. It functions in the pathway amino-acid biosynthesis; L-leucine biosynthesis; L-leucine from 3-methyl-2-oxobutanoate: step 4/4. It participates in amino-acid biosynthesis; L-valine biosynthesis; L-valine from pyruvate: step 4/4. Acts on leucine, isoleucine and valine. The chain is Branched-chain-amino-acid aminotransferase (ilvE) from Salmonella typhi.